The chain runs to 122 residues: S-adenosylmethionine decarboxylase proenzyme (122 aa).

The active-site Schiff-base intermediate with substrate; via pyruvic acid is S63. At S63 the chain carries Pyruvic acid (Ser); by autocatalysis. H68 (proton acceptor; for processing activity) is an active-site residue. The active-site Proton donor; for catalytic activity is the C83.

Belongs to the prokaryotic AdoMetDC family. Type 1 subfamily. As to quaternary structure, heterotetramer of two alpha and two beta chains arranged as a dimer of alpha/beta heterodimers. Pyruvate is required as a cofactor. Is synthesized initially as an inactive proenzyme. Formation of the active enzyme involves a self-maturation process in which the active site pyruvoyl group is generated from an internal serine residue via an autocatalytic post-translational modification. Two non-identical subunits are generated from the proenzyme in this reaction, and the pyruvate is formed at the N-terminus of the alpha chain, which is derived from the carboxyl end of the proenzyme. The post-translation cleavage follows an unusual pathway, termed non-hydrolytic serinolysis, in which the side chain hydroxyl group of the serine supplies its oxygen atom to form the C-terminus of the beta chain, while the remainder of the serine residue undergoes an oxidative deamination to produce ammonia and the pyruvoyl group blocking the N-terminus of the alpha chain.

The catalysed reaction is S-adenosyl-L-methionine + H(+) = S-adenosyl 3-(methylsulfanyl)propylamine + CO2. The protein operates within amine and polyamine biosynthesis; S-adenosylmethioninamine biosynthesis; S-adenosylmethioninamine from S-adenosyl-L-methionine: step 1/1. In terms of biological role, catalyzes the decarboxylation of S-adenosylmethionine to S-adenosylmethioninamine (dcAdoMet), the propylamine donor required for the synthesis of the polyamines spermine and spermidine from the diamine putrescine. This Methanococcus maripaludis (strain C7 / ATCC BAA-1331) protein is S-adenosylmethionine decarboxylase proenzyme.